Reading from the N-terminus, the 81-residue chain is UPF0410 protein YwzA (81 aa).

The next 3 membrane-spanning stretches (helical) occupy residues 1-21 (MSFL…SLFV), 27-47 (GGII…HGLL), and 56-76 (GFAI…VSLL).

Belongs to the UPF0410 family.

It localises to the cell membrane. The protein is UPF0410 protein YwzA (ywzA) of Bacillus subtilis (strain 168).